A 61-amino-acid polypeptide reads, in one-letter code: Photosystem II reaction center protein K (61 aa).

Residues 1–24 constitute a propeptide that is removed on maturation; the sequence is MLNIFSLICICLNSVLYSSSFFVA. The chain crosses the membrane as a helical span at residues 40–60; it reads MPVIPVLFFLLAFVWQAAVSF.

Belongs to the PsbK family. As to quaternary structure, PSII is composed of 1 copy each of membrane proteins PsbA, PsbB, PsbC, PsbD, PsbE, PsbF, PsbH, PsbI, PsbJ, PsbK, PsbL, PsbM, PsbT, PsbX, PsbY, PsbZ, Psb30/Ycf12, at least 3 peripheral proteins of the oxygen-evolving complex and a large number of cofactors. It forms dimeric complexes.

It is found in the plastid. It localises to the chloroplast thylakoid membrane. Functionally, one of the components of the core complex of photosystem II (PSII). PSII is a light-driven water:plastoquinone oxidoreductase that uses light energy to abstract electrons from H(2)O, generating O(2) and a proton gradient subsequently used for ATP formation. It consists of a core antenna complex that captures photons, and an electron transfer chain that converts photonic excitation into a charge separation. The polypeptide is Photosystem II reaction center protein K (Morus indica (Mulberry)).